The chain runs to 338 residues: Cinnamoyl-CoA reductase 1 (338 aa).

NADP(+)-binding positions include 22-28 (GAGGFIG), arginine 47, lysine 53, 73-74 (DV), 93-95 (VAS), tyrosine 165, lysine 169, 192-195 (PSMT), and serine 207. An intrachain disulfide couples cysteine 158 to cysteine 166. Lysine 169 acts as the Proton donor in catalysis.

The protein belongs to the NAD(P)-dependent epimerase/dehydratase family. Dihydroflavonol-4-reductase subfamily. In terms of assembly, interacts with RAC1 in a GTP-dependent manner.

Its subcellular location is the cytoplasm. It catalyses the reaction (E)-cinnamaldehyde + NADP(+) + CoA = (E)-cinnamoyl-CoA + NADPH + H(+). It participates in aromatic compound metabolism; phenylpropanoid biosynthesis. Activated by the small GTPase RAC1. Functionally, involved in the latter stages of lignin biosynthesis. Catalyzes one of the last steps of monolignol biosynthesis, the conversion of cinnamoyl-CoAs into their corresponding cinnamaldehydes. Probably involved in the formation of lignin in defense responses. This chain is Cinnamoyl-CoA reductase 1, found in Oryza sativa subsp. japonica (Rice).